A 64-amino-acid polypeptide reads, in one-letter code: Putative antitoxin VapB51 (64 aa).

Its function is as follows. Possibly the antitoxin component of a type II toxin-antitoxin (TA) system. Its cognate toxin is VapC51. This is Putative antitoxin VapB51 from Mycobacterium tuberculosis (strain ATCC 25618 / H37Rv).